A 278-amino-acid polypeptide reads, in one-letter code: Cell division protein FtsQ (278 aa).

At 1 to 6 the chain is on the cytoplasmic side; the sequence is MNATLR. The helical transmembrane segment at 7–27 threads the bilayer; that stretch reads ILAWLIAVALVALPVVAVLNG. Topologically, residues 28–278 are periplasmic; sequence WVGAERWPLA…SPFAIPGFKT (251 aa). Residues 34-103 form the POTRA domain; it reads WPLARLRVSG…DVLEVHVVEH (70 aa).

The protein belongs to the FtsQ/DivIB family. FtsQ subfamily. Part of a complex composed of FtsB, FtsL and FtsQ.

The protein resides in the cell inner membrane. In terms of biological role, essential cell division protein. May link together the upstream cell division proteins, which are predominantly cytoplasmic, with the downstream cell division proteins, which are predominantly periplasmic. May control correct divisome assembly. The sequence is that of Cell division protein FtsQ from Xanthomonas campestris pv. campestris (strain ATCC 33913 / DSM 3586 / NCPPB 528 / LMG 568 / P 25).